The sequence spans 668 residues: GTP-binding protein 1 (668 aa).

The disordered stretch occupies residues 1–32; sequence MAAERSRSPVDSPVPASMFAPEPSSPGAARAA. A phosphoserine mark is found at S6, S8, S12, S24, S25, S44, S47, and S69. Residues 158–389 enclose the tr-type G domain; sequence FLEVRVAVVG…LNLLSPRTSY (232 aa). The G1 stretch occupies residues 167–174; the sequence is GNVDAGKS. Position 167–174 (167–174) interacts with GTP; that stretch reads GNVDAGKS. The G2 stretch occupies residues 206–210; that stretch reads GRTSS. The interval 252–255 is G3; the sequence is DLAG. GTP contacts are provided by residues 252–256 and 308–311; these read DLAGH and TKID. Residues 308–311 are G4; the sequence is TKID. The interval 366 to 368 is G5; the sequence is SNV. Polar residues predominate over residues 573–595; the sequence is LLQTTNNSPMNSKPQQIKMQSTK. Residues 573-668 form a disordered region; that stretch reads LLQTTNNSPM…GACVTPASGC (96 aa). At S580 the chain carries Phosphoserine. The segment covering 609–619 has biased composition (low complexity); that stretch reads GVPAAGGPPTG. The span at 624–637 shows a compositional bias: polar residues; the sequence is SLGTAQAASTSGLQ. The segment covering 646–657 has biased composition (basic residues); that stretch reads GRRRGGQRHKVK.

Belongs to the TRAFAC class translation factor GTPase superfamily. Classic translation factor GTPase family. GTPBP1 subfamily. As to quaternary structure, interacts with EXOSC2/RRP4, EXOSC3/RRP40, EXOSC5/RRP46, HNRNPD, HNRNPR and SYNCRIP. Identified in a complex with AANAT mRNA, but does not bind mRNA by itself. Detected in some neurons in the brain cortex. Detected in small arteries, dendritic cells and macrophages in the thymus. Detected in lung bronchi, in bronchial epithelial cells and in bronchial smooth muscle cells. Detected in smooth muscle cells in a broad range of organs (at protein level). Expressed in brain, thymus, lung, and kidney.

It localises to the cytoplasm. In terms of biological role, promotes degradation of target mRNA species. Plays a role in the regulation of circadian mRNA stability. Binds GTP and has GTPase activity. The protein is GTP-binding protein 1 (Gtpbp1) of Mus musculus (Mouse).